A 199-amino-acid polypeptide reads, in one-letter code: 7-methyl-GTP pyrophosphatase (199 aa).

The active-site Proton acceptor is the aspartate 74.

This sequence belongs to the Maf family. YceF subfamily. A divalent metal cation serves as cofactor.

The protein localises to the cytoplasm. The enzyme catalyses N(7)-methyl-GTP + H2O = N(7)-methyl-GMP + diphosphate + H(+). In terms of biological role, nucleoside triphosphate pyrophosphatase that hydrolyzes 7-methyl-GTP (m(7)GTP). May have a dual role in cell division arrest and in preventing the incorporation of modified nucleotides into cellular nucleic acids. The chain is 7-methyl-GTP pyrophosphatase from Cupriavidus pinatubonensis (strain JMP 134 / LMG 1197) (Cupriavidus necator (strain JMP 134)).